The following is a 359-amino-acid chain: MSERKPPYLRSALDSIPPYRPGRKVVGPDGRSAKLSSNESPFGPLPSVRQAIADAAADLNRYPDPAAAELTAALARRFHVPEEHVALGAGSVGLLQQLLEATAEPGAEVVYAWRSFEAYPLLTGLAGATPIHVPLREETHDLEALAAAVTDRTRMVFVCNPNNPTGTAVRETELAEFLDTVPEHVLVVLDEAYREYVQDPRVPDGVQLYRDRPNVAVLRTFSKAYGLAALRVGFLIGHPQVVDAVRKTLVPFAVNHLAQAAAVASLAAEQELLERVAVTVKERERVRAALLADGWTVPETEANFVWLRLGEDTLDFAAACEQAGIAVRPFAGEGVRVSIGLPDDNDAFLTVARTYPKRN.

The interval 1–42 (MSERKPPYLRSALDSIPPYRPGRKVVGPDGRSAKLSSNESPF) is disordered. The residue at position 223 (Lys-223) is an N6-(pyridoxal phosphate)lysine.

Belongs to the class-II pyridoxal-phosphate-dependent aminotransferase family. As to quaternary structure, homodimer. Pyridoxal 5'-phosphate is required as a cofactor.

The catalysed reaction is an aromatic L-alpha-amino acid + 2-oxoglutarate = an aromatic oxo-acid + L-glutamate. Aminotransferase that catalyzes the conversion of aromatic amino acids and 2-oxoglutarate into corresponding aromatic oxo acids and L-glutamate. The chain is Aromatic amino acid aminotransferase from Thermobifida fusca (strain YX).